The chain runs to 311 residues: HPr kinase/phosphorylase (311 aa).

Residues His139 and Lys160 contribute to the active site. An ATP-binding site is contributed by 154-161; the sequence is GQSGVGKS. A Mg(2+)-binding site is contributed by Ser161. Catalysis depends on Asp178, which acts as the Proton acceptor; for phosphorylation activity. Proton donor; for dephosphorylation activity. The important for the catalytic mechanism of both phosphorylation and dephosphorylation stretch occupies residues 202–211; it reads LEIRGIGIID. Glu203 contacts Mg(2+). Arg244 is a catalytic residue. The tract at residues 265–270 is important for the catalytic mechanism of dephosphorylation; it reads PVRPGR.

It belongs to the HPrK/P family. As to quaternary structure, homohexamer. It depends on Mg(2+) as a cofactor.

The enzyme catalyses [HPr protein]-L-serine + ATP = [HPr protein]-O-phospho-L-serine + ADP + H(+). It carries out the reaction [HPr protein]-O-phospho-L-serine + phosphate + H(+) = [HPr protein]-L-serine + diphosphate. Catalyzes the ATP- as well as the pyrophosphate-dependent phosphorylation of a specific serine residue in HPr, a phosphocarrier protein of the phosphoenolpyruvate-dependent sugar phosphotransferase system (PTS). HprK/P also catalyzes the pyrophosphate-producing, inorganic phosphate-dependent dephosphorylation (phosphorolysis) of seryl-phosphorylated HPr (P-Ser-HPr). The two antagonistic activities of HprK/P are regulated by several intracellular metabolites, which change their concentration in response to the absence or presence of rapidly metabolisable carbon sources (glucose, fructose, etc.) in the growth medium. Therefore, by controlling the phosphorylation state of HPr, HPrK/P is a sensor enzyme that plays a major role in the regulation of carbon metabolism and sugar transport: it mediates carbon catabolite repression (CCR), and regulates PTS-catalyzed carbohydrate uptake and inducer exclusion. This chain is HPr kinase/phosphorylase, found in Exiguobacterium sp. (strain ATCC BAA-1283 / AT1b).